Consider the following 867-residue polypeptide: Leucine--tRNA ligase (867 aa).

The short motif at 42 to 52 (PYPSGKLHMGH) is the 'HIGH' region element. A 'KMSKS' region motif is present at residues 631–635 (KMSKS). Lys634 is a binding site for ATP.

This sequence belongs to the class-I aminoacyl-tRNA synthetase family.

The protein localises to the cytoplasm. The catalysed reaction is tRNA(Leu) + L-leucine + ATP = L-leucyl-tRNA(Leu) + AMP + diphosphate. The sequence is that of Leucine--tRNA ligase from Dichelobacter nodosus (strain VCS1703A).